Here is a 431-residue protein sequence, read N- to C-terminus: Glutamate-1-semialdehyde 2,1-aminomutase 1 (431 aa).

K268 bears the N6-(pyridoxal phosphate)lysine mark.

This sequence belongs to the class-III pyridoxal-phosphate-dependent aminotransferase family. HemL subfamily. As to quaternary structure, homodimer. The cofactor is pyridoxal 5'-phosphate.

It localises to the cytoplasm. The enzyme catalyses (S)-4-amino-5-oxopentanoate = 5-aminolevulinate. It participates in porphyrin-containing compound metabolism; protoporphyrin-IX biosynthesis; 5-aminolevulinate from L-glutamyl-tRNA(Glu): step 2/2. This Bacillus pumilus (strain SAFR-032) protein is Glutamate-1-semialdehyde 2,1-aminomutase 1.